A 455-amino-acid chain; its full sequence is ATP-dependent protease ATPase subunit HslU (455 aa).

ATP is bound by residues Ile19 and Gly61–Glu66. The interval Glu144–Lys163 is disordered. Positions 268, 333, and 405 each coordinate ATP.

Belongs to the ClpX chaperone family. HslU subfamily. As to quaternary structure, a double ring-shaped homohexamer of HslV is capped on each side by a ring-shaped HslU homohexamer. The assembly of the HslU/HslV complex is dependent on binding of ATP.

It is found in the cytoplasm. Its function is as follows. ATPase subunit of a proteasome-like degradation complex; this subunit has chaperone activity. The binding of ATP and its subsequent hydrolysis by HslU are essential for unfolding of protein substrates subsequently hydrolyzed by HslV. HslU recognizes the N-terminal part of its protein substrates and unfolds these before they are guided to HslV for hydrolysis. The polypeptide is ATP-dependent protease ATPase subunit HslU (Francisella tularensis subsp. holarctica (strain FTNF002-00 / FTA)).